Reading from the N-terminus, the 87-residue chain is Exodeoxyribonuclease 7 small subunit (87 aa).

This sequence belongs to the XseB family. As to quaternary structure, heterooligomer composed of large and small subunits.

Its subcellular location is the cytoplasm. The enzyme catalyses Exonucleolytic cleavage in either 5'- to 3'- or 3'- to 5'-direction to yield nucleoside 5'-phosphates.. Functionally, bidirectionally degrades single-stranded DNA into large acid-insoluble oligonucleotides, which are then degraded further into small acid-soluble oligonucleotides. The sequence is that of Exodeoxyribonuclease 7 small subunit from Serratia proteamaculans (strain 568).